A 122-amino-acid polypeptide reads, in one-letter code: Large ribosomal subunit protein uL14 (122 aa).

It belongs to the universal ribosomal protein uL14 family. As to quaternary structure, part of the 50S ribosomal subunit. Forms a cluster with proteins L3 and L19. In the 70S ribosome, L14 and L19 interact and together make contacts with the 16S rRNA in bridges B5 and B8.

Functionally, binds to 23S rRNA. Forms part of two intersubunit bridges in the 70S ribosome. The protein is Large ribosomal subunit protein uL14 of Mycoplasma genitalium (strain ATCC 33530 / DSM 19775 / NCTC 10195 / G37) (Mycoplasmoides genitalium).